The sequence spans 2103 residues: Orsellinic acid synthase (2103 aa).

The segment at 17-232 (DAVHDLNVRS…KRPELAHATI (216 aa)) is N-terminal acylcarrier protein transacylase domain (SAT). The Ketosynthase family 3 (KS3) domain maps to 348 to 782 (ADAIAVVGMS…GGNVSMLLQD (435 aa)). Catalysis depends on for beta-ketoacyl synthase activity residues cysteine 525, histidine 660, and histidine 702. Positions 881 to 1197 (VFTFTGQGAQ…RRGGDDWQSV (317 aa)) are malonyl-CoA:ACP transacylase (MAT) domain. Catalysis depends on serine 973, which acts as the For acyl/malonyl transferase activity. The tract at residues 1272 to 1409 (HAVEKLQREE…GQPDSAVRRD (138 aa)) is N-terminal hotdog fold. The 311-residue stretch at 1272–1582 (HAVEKLQREE…FKKLERDFFA (311 aa)) folds into the PKS/mFAS DH domain. The interval 1303-1579 (GHVVDESAIC…DICFKKLERD (277 aa)) is product template (PT) domain. The active-site Proton acceptor; for dehydratase activity is histidine 1304. The tract at residues 1433–1582 (VHAMDTALFY…FKKLERDFFA (150 aa)) is C-terminal hotdog fold. The active-site Proton donor; for dehydratase activity is the aspartate 1493. The tract at residues 1592–1638 (STKPVAAAPAKSMAKRARQLAPSPSPSSSSGSNTPMSRSPTPSSVSD) is disordered. Composition is skewed to low complexity over residues 1594–1603 (KPVAAAPAKS) and 1617–1631 (PSSSSGSNTPMSRSP). 2 consecutive Carrier domains span residues 1640–1716 (VDLG…GGSA) and 1741–1815 (PAPS…DDDA). Serine 1676 carries the O-(pantetheine 4'-phosphoryl)serine modification. A disordered region spans residues 1722–1743 (EDITKPTPSPEQTQARKQGPAP). Serine 1775 is modified (O-(pantetheine 4'-phosphoryl)serine). The disordered stretch occupies residues 1809–1838 (EALDDDAEEESAPAQTSTNPAKETTIDSSR). The span at 1810 to 1819 (ALDDDAEEES) shows a compositional bias: acidic residues. Positions 1823–1836 (QTSTNPAKETTIDS) are enriched in polar residues. The thioesterase (TE) domain stretch occupies residues 1849–2082 (ASYIHLKALP…TVNGDHFSMM (234 aa)).

The enzyme catalyses 3 malonyl-CoA + acetyl-CoA + 2 H(+) = orsellinate + 3 CO2 + 4 CoA. It functions in the pathway secondary metabolite biosynthesis. Functionally, non-reducing polyketide synthase; part of the gene cluster that mediates the biosynthesis of orsellinic acid, as well as of the cathepsin K inhibitors F9775 A and F9775 B. The non-reducing polyketide synthase orsA produces orsellinic acid by condensing acetyl-CoA with 3 malonyl-CoA units. Further modifications by the decarboxylase orsB and the tyrosinase-like protein orsC lead to the production of F9775 A and F9775 B. The functions of orsD and orsE remain unclear since only orsB and orsC are required to convert orsellinic acid into F9775 A and F9775 B. The chain is Orsellinic acid synthase from Emericella nidulans (strain FGSC A4 / ATCC 38163 / CBS 112.46 / NRRL 194 / M139) (Aspergillus nidulans).